Here is a 288-residue protein sequence, read N- to C-terminus: Alpha/beta hydrolase domain-containing protein 17B (288 aa).

Residues Ser-170, Asp-235, and His-264 each act as charge relay system in the active site.

It belongs to the AB hydrolase superfamily. ABHD17 family. Palmitoylated on cysteine residues located in a cysteine cluster at the N-terminus which promotes membrane localization.

The protein resides in the cell membrane. It is found in the recycling endosome membrane. Its subcellular location is the cell projection. It localises to the dendritic spine. The protein localises to the postsynaptic density membrane. It catalyses the reaction S-hexadecanoyl-L-cysteinyl-[protein] + H2O = L-cysteinyl-[protein] + hexadecanoate + H(+). Hydrolyzes fatty acids from S-acylated cysteine residues in proteins. Has depalmitoylating activity towards NRAS. This chain is Alpha/beta hydrolase domain-containing protein 17B, found in Gallus gallus (Chicken).